Reading from the N-terminus, the 180-residue chain is Large ribosomal subunit protein uL6 (180 aa).

This sequence belongs to the universal ribosomal protein uL6 family. In terms of assembly, part of the 50S ribosomal subunit.

This protein binds to the 23S rRNA, and is important in its secondary structure. It is located near the subunit interface in the base of the L7/L12 stalk, and near the tRNA binding site of the peptidyltransferase center. This Clostridium botulinum (strain Eklund 17B / Type B) protein is Large ribosomal subunit protein uL6.